Reading from the N-terminus, the 831-residue chain is Periplasmic nitrate reductase (831 aa).

Positions methionine 1–alanine 29 form a signal peptide, tat-type signal. Residues leucine 41–aspartate 97 enclose the 4Fe-4S Mo/W bis-MGD-type domain. 4 residues coordinate [4Fe-4S] cluster: cysteine 48, cysteine 51, cysteine 55, and cysteine 83. Mo-bis(molybdopterin guanine dinucleotide) contacts are provided by residues lysine 85, glutamine 152, asparagine 177, cysteine 181, tryptophan 214–methionine 221, serine 245–histidine 249, glutamine 264–aspartate 266, methionine 375, glutamine 379, asparagine 485, serine 511–aspartate 512, lysine 534, aspartate 561, and threonine 721–serine 730. Tryptophan 797 contacts substrate. Mo-bis(molybdopterin guanine dinucleotide) is bound by residues asparagine 805 and lysine 822.

The protein belongs to the prokaryotic molybdopterin-containing oxidoreductase family. NasA/NapA/NarB subfamily. In terms of assembly, component of the periplasmic nitrate reductase NapAB complex composed of NapA and NapB. [4Fe-4S] cluster serves as cofactor. Requires Mo-bis(molybdopterin guanine dinucleotide) as cofactor. Predicted to be exported by the Tat system. The position of the signal peptide cleavage has not been experimentally proven.

The protein localises to the periplasm. The enzyme catalyses 2 Fe(II)-[cytochrome] + nitrate + 2 H(+) = 2 Fe(III)-[cytochrome] + nitrite + H2O. Functionally, catalytic subunit of the periplasmic nitrate reductase complex NapAB. Receives electrons from NapB and catalyzes the reduction of nitrate to nitrite. This chain is Periplasmic nitrate reductase, found in Cupriavidus taiwanensis (strain DSM 17343 / BCRC 17206 / CCUG 44338 / CIP 107171 / LMG 19424 / R1) (Ralstonia taiwanensis (strain LMG 19424)).